The following is a 141-amino-acid chain: MAITVHCDIVSAEAEIFSGLVEMVIAHGALGDLGIAPGHAPLITDLKPGPIRLVKQGGEQEVYYISGGFLEVQPNMVKVLADTVVRAGDLDEAAAQEALKAAEKALQGKGAEFDYSAAAARLAEAAAQLRTVQQLRKKFGG.

It belongs to the ATPase epsilon chain family. As to quaternary structure, F-type ATPases have 2 components, CF(1) - the catalytic core - and CF(0) - the membrane proton channel. CF(1) has five subunits: alpha(3), beta(3), gamma(1), delta(1), epsilon(1). CF(0) has three main subunits: a, b and c.

The protein localises to the cell inner membrane. Its function is as follows. Produces ATP from ADP in the presence of a proton gradient across the membrane. The protein is ATP synthase epsilon chain of Pseudomonas aeruginosa (strain LESB58).